The sequence spans 181 residues: Thioredoxin M-type, chloroplastic (181 aa).

Residues Met-1 to Cys-67 constitute a chloroplast transit peptide. In terms of domain architecture, Thioredoxin spans Lys-68–Ser-180. Active-site nucleophile residues include Cys-104 and Cys-107. Cys-104 and Cys-107 are disulfide-bonded.

Belongs to the thioredoxin family. Plant M-type subfamily. In terms of assembly, forms a complex with heterodimeric ferredoxin-thioredoxin reductase (FTR) and ferredoxin.

It localises to the plastid. Its subcellular location is the chloroplast. Participates in various redox reactions through the reversible oxidation of the active center dithiol to a disulfide. The M form is known to activate NADP-malate dehydrogenase. The protein is Thioredoxin M-type, chloroplastic of Spinacia oleracea (Spinach).